A 111-amino-acid polypeptide reads, in one-letter code: ATP synthase subunit c (111 aa).

Transmembrane regions (helical) follow at residues 38-58 (GLGVVAVGAGLAMIGAIGSGL) and 89-109 (AGIAETASIYSFIVALLLIFV).

This sequence belongs to the ATPase C chain family. As to quaternary structure, F-type ATPases have 2 components, F(1) - the catalytic core - and F(0) - the membrane proton channel. F(1) has five subunits: alpha(3), beta(3), gamma(1), delta(1), epsilon(1). F(0) has three main subunits: a(1), b(2) and c(10-14). The alpha and beta chains form an alternating ring which encloses part of the gamma chain. F(1) is attached to F(0) by a central stalk formed by the gamma and epsilon chains, while a peripheral stalk is formed by the delta and b chains.

It localises to the cell membrane. Its function is as follows. F(1)F(0) ATP synthase produces ATP from ADP in the presence of a proton or sodium gradient. F-type ATPases consist of two structural domains, F(1) containing the extramembraneous catalytic core and F(0) containing the membrane proton channel, linked together by a central stalk and a peripheral stalk. During catalysis, ATP synthesis in the catalytic domain of F(1) is coupled via a rotary mechanism of the central stalk subunits to proton translocation. Key component of the F(0) channel; it plays a direct role in translocation across the membrane. A homomeric c-ring of between 10-14 subunits forms the central stalk rotor element with the F(1) delta and epsilon subunits. This Mycoplasmopsis synoviae (strain 53) (Mycoplasma synoviae) protein is ATP synthase subunit c.